Reading from the N-terminus, the 103-residue chain is Cell division suppressor protein YneA (103 aa).

In terms of domain architecture, LysM spans 36–87 (VKIEVQSGDTLWGLADQVNDSKSIDKNAFIDWVTQHNDLASTEIQPGDILVI).

The protein belongs to the YneA family.

The protein resides in the cytoplasm. Inhibits cell division during the SOS response. Affects a later stage of the cell division protein assembly, after the assembly of the Z ring, by probably suppressing recruitment of FtsL and/or DivIC to the division machinery. The protein is Cell division suppressor protein YneA of Bacillus pumilus (strain SAFR-032).